The following is a 212-amino-acid chain: Uracil phosphoribosyltransferase (212 aa).

5-phospho-alpha-D-ribose 1-diphosphate-binding positions include Arg-78, Arg-103, and 130 to 138 (DPMLATGSS). Residues Ile-193 and 198–200 (GDA) contribute to the uracil site. Residue Asp-199 coordinates 5-phospho-alpha-D-ribose 1-diphosphate.

The protein belongs to the UPRTase family. It depends on Mg(2+) as a cofactor.

It carries out the reaction UMP + diphosphate = 5-phospho-alpha-D-ribose 1-diphosphate + uracil. Its pathway is pyrimidine metabolism; UMP biosynthesis via salvage pathway; UMP from uracil: step 1/1. Allosterically activated by GTP. Catalyzes the conversion of uracil and 5-phospho-alpha-D-ribose 1-diphosphate (PRPP) to UMP and diphosphate. The polypeptide is Uracil phosphoribosyltransferase (Pseudomonas syringae pv. tomato (strain ATCC BAA-871 / DC3000)).